The chain runs to 173 residues: NADH-ubiquinone oxidoreductase chain 6 (173 aa).

The next 5 membrane-spanning stretches (helical) occupy residues 1–21, 27–47, 48–68, 87–107, and 139–159; these read MTYF…AVAS, YGVV…LSLG, VSFV…VVFV, VVGY…VGGF, and CGVG…FVVL.

It belongs to the complex I subunit 6 family.

It localises to the mitochondrion membrane. It catalyses the reaction a ubiquinone + NADH + 5 H(+)(in) = a ubiquinol + NAD(+) + 4 H(+)(out). Functionally, core subunit of the mitochondrial membrane respiratory chain NADH dehydrogenase (Complex I) that is believed to belong to the minimal assembly required for catalysis. Complex I functions in the transfer of electrons from NADH to the respiratory chain. The immediate electron acceptor for the enzyme is believed to be ubiquinone. This is NADH-ubiquinone oxidoreductase chain 6 (MT-ND6) from Aethia cristatella (Crested auklet).